The primary structure comprises 154 residues: Myoglobin (154 aa).

The Globin domain maps to glycine 2–lysine 148. Serine 4 bears the Phosphoserine mark. Histidine 65 lines the nitrite pocket. An O2-binding site is contributed by histidine 65. Residue threonine 68 is modified to Phosphothreonine. Histidine 94 contributes to the heme b binding site.

This sequence belongs to the globin family. Monomeric.

It localises to the cytoplasm. The protein localises to the sarcoplasm. It carries out the reaction Fe(III)-heme b-[protein] + nitric oxide + H2O = Fe(II)-heme b-[protein] + nitrite + 2 H(+). It catalyses the reaction H2O2 + AH2 = A + 2 H2O. In terms of biological role, monomeric heme protein which primary function is to store oxygen and facilitate its diffusion within muscle tissues. Reversibly binds oxygen through a pentacoordinated heme iron and enables its timely and efficient release as needed during periods of heightened demand. Depending on the oxidative conditions of tissues and cells, and in addition to its ability to bind oxygen, it also has a nitrite reductase activity whereby it regulates the production of bioactive nitric oxide. Under stress conditions, like hypoxia and anoxia, it also protects cells against reactive oxygen species thanks to its pseudoperoxidase activity. The chain is Myoglobin (MB) from Pongo pygmaeus (Bornean orangutan).